Here is a 642-residue protein sequence, read N- to C-terminus: Threonine--tRNA ligase (642 aa).

Residues 1–61 (MPVITLPDGS…ETDSDLSIIT (61 aa)) enclose the TGS domain. A catalytic region spans residues 243 to 534 (DHRKIGKQLD…LIEEYAGKFP (292 aa)). Positions 334, 385, and 511 each coordinate Zn(2+).

It belongs to the class-II aminoacyl-tRNA synthetase family. In terms of assembly, homodimer. Requires Zn(2+) as cofactor.

Its subcellular location is the cytoplasm. The enzyme catalyses tRNA(Thr) + L-threonine + ATP = L-threonyl-tRNA(Thr) + AMP + diphosphate + H(+). In terms of biological role, catalyzes the attachment of threonine to tRNA(Thr) in a two-step reaction: L-threonine is first activated by ATP to form Thr-AMP and then transferred to the acceptor end of tRNA(Thr). Also edits incorrectly charged L-seryl-tRNA(Thr). The sequence is that of Threonine--tRNA ligase from Shewanella pealeana (strain ATCC 700345 / ANG-SQ1).